The following is a 322-amino-acid chain: Outer membrane protein assembly factor BamC (322 aa).

The first 22 residues, 1–22, serve as a signal peptide directing secretion; that stretch reads MISLLAVAVLAGCSNPETRSQA.

It belongs to the BamC family. As to quaternary structure, part of the Bam complex.

The protein localises to the cell outer membrane. Part of the outer membrane protein assembly complex, which is involved in assembly and insertion of beta-barrel proteins into the outer membrane. The polypeptide is Outer membrane protein assembly factor BamC (Oceanimonas sp. (strain GK1 / IBRC-M 10197)).